Reading from the N-terminus, the 366-residue chain is 1-deoxy-D-xylulose 5-phosphate reductoisomerase (366 aa).

NADPH is bound by residues T7, G8, S9, I10, G31, K32, N33, and N113. K114 provides a ligand contact to 1-deoxy-D-xylulose 5-phosphate. E115 is a binding site for NADPH. D133 provides a ligand contact to Mn(2+). Residues S134, E135, S158, and H181 each coordinate 1-deoxy-D-xylulose 5-phosphate. E135 is a Mn(2+) binding site. G187 contributes to the NADPH binding site. 1-deoxy-D-xylulose 5-phosphate contacts are provided by S194, N199, K200, and E203. E203 serves as a coordination point for Mn(2+).

Belongs to the DXR family. Mg(2+) serves as cofactor. The cofactor is Mn(2+).

It catalyses the reaction 2-C-methyl-D-erythritol 4-phosphate + NADP(+) = 1-deoxy-D-xylulose 5-phosphate + NADPH + H(+). Its pathway is isoprenoid biosynthesis; isopentenyl diphosphate biosynthesis via DXP pathway; isopentenyl diphosphate from 1-deoxy-D-xylulose 5-phosphate: step 1/6. Its function is as follows. Catalyzes the NADPH-dependent rearrangement and reduction of 1-deoxy-D-xylulose-5-phosphate (DXP) to 2-C-methyl-D-erythritol 4-phosphate (MEP). This is 1-deoxy-D-xylulose 5-phosphate reductoisomerase from Helicobacter pylori (strain G27).